The chain runs to 226 residues: Cytidylate kinase (226 aa).

Glycine 10 to threonine 18 contacts ATP.

Belongs to the cytidylate kinase family. Type 1 subfamily.

It is found in the cytoplasm. It carries out the reaction CMP + ATP = CDP + ADP. It catalyses the reaction dCMP + ATP = dCDP + ADP. The polypeptide is Cytidylate kinase (Streptococcus uberis (strain ATCC BAA-854 / 0140J)).